A 370-amino-acid chain; its full sequence is Putative glutamate--cysteine ligase 2 (370 aa).

The protein belongs to the glutamate--cysteine ligase type 2 family. YbdK subfamily.

It carries out the reaction L-cysteine + L-glutamate + ATP = gamma-L-glutamyl-L-cysteine + ADP + phosphate + H(+). ATP-dependent carboxylate-amine ligase which exhibits weak glutamate--cysteine ligase activity. The polypeptide is Putative glutamate--cysteine ligase 2 (Janthinobacterium sp. (strain Marseille) (Minibacterium massiliensis)).